A 399-amino-acid polypeptide reads, in one-letter code: 4-hydroxy-3-methylbut-2-enyl diphosphate reductase (399 aa).

Position 66 (C66) interacts with [4Fe-4S] cluster. Position 96 (H96) interacts with (2E)-4-hydroxy-3-methylbut-2-enyl diphosphate. Residue H96 participates in dimethylallyl diphosphate binding. H96 serves as a coordination point for isopentenyl diphosphate. A [4Fe-4S] cluster-binding site is contributed by C157. A (2E)-4-hydroxy-3-methylbut-2-enyl diphosphate-binding site is contributed by H185. Dimethylallyl diphosphate is bound at residue H185. H185 lines the isopentenyl diphosphate pocket. The active-site Proton donor is E187. Position 250 (T250) interacts with (2E)-4-hydroxy-3-methylbut-2-enyl diphosphate. Residue C288 coordinates [4Fe-4S] cluster. The (2E)-4-hydroxy-3-methylbut-2-enyl diphosphate site is built by S317, S318, N319, and S379. Dimethylallyl diphosphate-binding residues include S317, S318, N319, and S379. Isopentenyl diphosphate-binding residues include S317, S318, N319, and S379.

This sequence belongs to the IspH family. The cofactor is [4Fe-4S] cluster.

The catalysed reaction is isopentenyl diphosphate + 2 oxidized [2Fe-2S]-[ferredoxin] + H2O = (2E)-4-hydroxy-3-methylbut-2-enyl diphosphate + 2 reduced [2Fe-2S]-[ferredoxin] + 2 H(+). It carries out the reaction dimethylallyl diphosphate + 2 oxidized [2Fe-2S]-[ferredoxin] + H2O = (2E)-4-hydroxy-3-methylbut-2-enyl diphosphate + 2 reduced [2Fe-2S]-[ferredoxin] + 2 H(+). It participates in isoprenoid biosynthesis; dimethylallyl diphosphate biosynthesis; dimethylallyl diphosphate from (2E)-4-hydroxy-3-methylbutenyl diphosphate: step 1/1. It functions in the pathway isoprenoid biosynthesis; isopentenyl diphosphate biosynthesis via DXP pathway; isopentenyl diphosphate from 1-deoxy-D-xylulose 5-phosphate: step 6/6. Its function is as follows. Catalyzes the conversion of 1-hydroxy-2-methyl-2-(E)-butenyl 4-diphosphate (HMBPP) into a mixture of isopentenyl diphosphate (IPP) and dimethylallyl diphosphate (DMAPP). Acts in the terminal step of the DOXP/MEP pathway for isoprenoid precursor biosynthesis. This Synechococcus sp. (strain WH7803) protein is 4-hydroxy-3-methylbut-2-enyl diphosphate reductase.